Reading from the N-terminus, the 1445-residue chain is 3'-5' RNA helicase YTHDC2 (1445 aa).

The tract at residues 1–50 (MSRPSSVSPRPPAPSGGGTGGGGGGSGGGGGGGGGGPASCGPGGGGRAKG) is disordered. A compositionally biased stretch (gly residues) spans 15–48 (SGGGTGGGGGGSGGGGGGGGGGPASCGPGGGGRA). The 69-residue stretch at 53 to 121 (DIRIDEEVKI…NRYLTVKKKD (69 aa)) folds into the R3H domain. Residues 218–384 (VKIIKENKVV…FGSCPVIYIQ (167 aa)) enclose the Helicase ATP-binding domain. 231–238 (GETGSGKT) lines the ATP pocket. A DEAH box motif is present at residues 331–334 (DEVH). 2 ANK repeats span residues 521–553 (TSAT…SKAS) and 554–586 (NGWM…FGNL). Residues 627-799 (LLYNICHSCD…ELCLHTKLLA (173 aa)) form the Helicase C-terminal domain. Phosphoserine occurs at positions 1104, 1105, and 1107. Polar residues predominate over residues 1179 to 1189 (EQSAGLQQPSG). The segment at 1179–1303 (EQSAGLQQPS…SPSPRPNMPI (125 aa)) is disordered. The span at 1246–1264 (KYKDRGILHPKRSTDDRSD) shows a compositional bias: basic and acidic residues. Positions 1265-1279 (QSSVKSTDSSSYPSP) are enriched in low complexity. A phosphoserine mark is found at Ser-1278, Ser-1282, and Ser-1296. Residues 1303-1433 (IRYFIMKSSN…QVGEQLLQLW (131 aa)) form the YTH domain. RNA is bound by residues 1309–1311 (KSS), Trp-1325, and Trp-1375.

The protein belongs to the DEAD box helicase family. DEAH subfamily. In terms of assembly, interacts with MEIOC; binds transcripts that regulate the mitotic cell cycle inhibiting progression into metaphase, thereby allowing meiotic prophase to proceed normally. Interacts (via ANK repeats) with XRN1. Interacts with ZCCHC4. Associates with the small ribosomal subunit. Interacts with RBM46. Present in male and female germ cells (at protein level). Highly expressed in testis. Not detected in spermatogonia next to the tubule wall but is strongly expressed in spermatocytes, suggesting that it is up-regulated in germ cells upon entry into meiosis (at protein level).

The protein resides in the cytoplasm. Its subcellular location is the perinuclear region. It catalyses the reaction ATP + H2O = ADP + phosphate + H(+). Functionally, 3'-5' RNA helicase that plays a key role in the male and female germline by promoting transition from mitotic to meiotic divisions in stem cells. Specifically recognizes and binds N6-methyladenosine (m6A)-containing RNAs, a modification present at internal sites of mRNAs and some non-coding RNAs that plays a role in the efficiency of RNA processing and stability. Essential for ensuring a successful progression of the meiotic program in the germline by regulating the level of m6A-containing RNAs. Acts by binding and promoting degradation of m6A-containing mRNAs: the 3'-5' RNA helicase activity is required for this process and RNA degradation may be mediated by XRN1 exoribonuclease. Required for both spermatogenesis and oogenesis. The protein is 3'-5' RNA helicase YTHDC2 of Mus musculus (Mouse).